The chain runs to 90 residues: uncharacterized protein (90 aa).

The segment at 62–90 is disordered; that stretch reads RQLKKKQAYKPDPEASFSWSANTSTRGRR. Positions 78–90 are enriched in polar residues; sequence FSWSANTSTRGRR.

This is an uncharacterized protein from Escherichia coli (strain K12).